Reading from the N-terminus, the 588-residue chain is Protein kinase C iota type (588 aa).

Residues 18 to 101 (QVRVKAYYRG…SELIIHVFPC (84 aa)) enclose the PB1 domain. Residues 133 to 183 (GHAFQAKRFNRRAHCAICTDRIWGLGRQGYKCINCKLLVHKKCHKLVTVEC) form a Phorbol-ester/DAG-type zinc finger. Residues 194 to 213 (GRIDPGSTHPEHPDQVLGKK) form a disordered region. The Protein kinase domain maps to 246 to 514 (FDLLRVIGRG…FADIMAHPFF (269 aa)). ATP is bound by residues 252–260 (IGRGSYAKV) and Lys275. Asp370 serves as the catalytic Proton acceptor. Residues Thr404 and Thr556 each carry the phosphothreonine modification. One can recognise an AGC-kinase C-terminal domain in the interval 515-586 (RNVDWDLMEQ…INPLLMSAEE (72 aa)).

The protein belongs to the protein kinase superfamily. AGC Ser/Thr protein kinase family. PKC subfamily.

It catalyses the reaction L-seryl-[protein] + ATP = O-phospho-L-seryl-[protein] + ADP + H(+). The enzyme catalyses L-threonyl-[protein] + ATP = O-phospho-L-threonyl-[protein] + ADP + H(+). Exhibits an elevated basal enzymatic activity and is not regulated by diacylglycerol, phosphatidylserine, phorbol esters or calcium ions. Two specific sites, Thr-404 (activation loop of the kinase domain) and Thr-556 (turn motif), need to be phosphorylated for its full activation. Functionally, calcium- and diacylglycerol-independent serine/ threonine-protein kinase that plays a general protective role against apoptotic stimuli, is involved in NF-kappa-B activation, cell survival, differentiation and polarity, and contributes to the regulation of microtubule dynamics in the early secretory pathway. Is required for the formation and maintenance of the zonula adherens during early epithelial development and plays a critical role in organ morphogenesis and in regulating the orientation of cell division. Required for polarized epithelial organization, myocardium coherence and cell connectivity in the early somite stages. Required for heart cone tilt and development of circulatory architecture during embryogenesis. In Danio rerio (Zebrafish), this protein is Protein kinase C iota type (prkci).